Consider the following 385-residue polypeptide: Galactokinase (385 aa).

Residue 34–37 participates in substrate binding; sequence EHTD. 124-130 lines the ATP pocket; the sequence is SSGLSSS. Residues S130 and E162 each contribute to the Mg(2+) site. D174 (proton acceptor) is an active-site residue. A substrate-binding site is contributed by Y223.

Belongs to the GHMP kinase family. GalK subfamily.

Its subcellular location is the cytoplasm. It catalyses the reaction alpha-D-galactose + ATP = alpha-D-galactose 1-phosphate + ADP + H(+). It participates in carbohydrate metabolism; galactose metabolism. In terms of biological role, catalyzes the transfer of the gamma-phosphate of ATP to D-galactose to form alpha-D-galactose-1-phosphate (Gal-1-P). This Actinobacillus succinogenes (strain ATCC 55618 / DSM 22257 / CCUG 43843 / 130Z) protein is Galactokinase.